Reading from the N-terminus, the 243-residue chain is MRTRVIVNGANGKMGILACETLENHEQFEVVAKLSRQDNLGQSILDTKAQIVVDLTRADCVYENSLTIINHGARPVIGTSGLVETQIDELTKLCKIKQIGGIIAPNFSLGAILMMMLAAKASEYFSEVEIIEGHHQQKLDAPSGTALKTAEMMAAARKKPKNKLPLKELTPGARGGSHHDINIHSLRLPGLLARQEVLFGNIGETLSITHNSIDRRCFMPGIVLACQKVLNLTNLVYGLEHLL.

NAD(+) contacts are provided by residues 9–14 (GANGKM), 78–80 (GTS), and 104–107 (APNF). H134 functions as the Proton donor/acceptor in the catalytic mechanism. Residue H135 participates in (S)-2,3,4,5-tetrahydrodipicolinate binding. Catalysis depends on K138, which acts as the Proton donor. 144–145 (GT) contributes to the (S)-2,3,4,5-tetrahydrodipicolinate binding site.

It belongs to the DapB family.

The protein resides in the cytoplasm. The enzyme catalyses (S)-2,3,4,5-tetrahydrodipicolinate + NAD(+) + H2O = (2S,4S)-4-hydroxy-2,3,4,5-tetrahydrodipicolinate + NADH + H(+). The catalysed reaction is (S)-2,3,4,5-tetrahydrodipicolinate + NADP(+) + H2O = (2S,4S)-4-hydroxy-2,3,4,5-tetrahydrodipicolinate + NADPH + H(+). Its pathway is amino-acid biosynthesis; L-lysine biosynthesis via DAP pathway; (S)-tetrahydrodipicolinate from L-aspartate: step 4/4. Functionally, catalyzes the conversion of 4-hydroxy-tetrahydrodipicolinate (HTPA) to tetrahydrodipicolinate. The protein is 4-hydroxy-tetrahydrodipicolinate reductase of Legionella pneumophila (strain Lens).